The primary structure comprises 106 residues: DNA-directed RNA polymerase subunit Rpo6 (106 aa).

This sequence belongs to the archaeal Rpo6/eukaryotic RPB6 RNA polymerase subunit family. As to quaternary structure, part of the RNA polymerase complex.

Its subcellular location is the cytoplasm. The enzyme catalyses RNA(n) + a ribonucleoside 5'-triphosphate = RNA(n+1) + diphosphate. Its function is as follows. DNA-dependent RNA polymerase (RNAP) catalyzes the transcription of DNA into RNA using the four ribonucleoside triphosphates as substrates. The protein is DNA-directed RNA polymerase subunit Rpo6 of Pyrobaculum aerophilum (strain ATCC 51768 / DSM 7523 / JCM 9630 / CIP 104966 / NBRC 100827 / IM2).